A 565-amino-acid chain; its full sequence is Periplasmic trehalase (565 aa).

A signal peptide spans 1-30; it reads MKSPAPSRPQKMALIPACIFLCFAALSVQA. Residues Arg152, 159–160, Asn196, 205–207, 277–279, and Gly310 contribute to the substrate site; these read WD, RSQ, and RPE. Catalysis depends on proton donor/acceptor residues Asp312 and Glu496. Glu511 lines the substrate pocket. A disordered region spans residues 538–565; sequence PCDNVPATRPTVKSATTQPSTKEAQPTP. The span at 548-565 shows a compositional bias: polar residues; the sequence is TVKSATTQPSTKEAQPTP.

This sequence belongs to the glycosyl hydrolase 37 family. As to quaternary structure, monomer.

Its subcellular location is the periplasm. It catalyses the reaction alpha,alpha-trehalose + H2O = alpha-D-glucose + beta-D-glucose. Provides the cells with the ability to utilize trehalose at high osmolarity by splitting it into glucose molecules that can subsequently be taken up by the phosphotransferase-mediated uptake system. The sequence is that of Periplasmic trehalase from Escherichia coli O139:H28 (strain E24377A / ETEC).